A 74-amino-acid chain; its full sequence is Cecropin-P3 (74 aa).

Residues methionine 1 to serine 13 form the signal peptide. Residues arginine 45–isoleucine 74 constitute a propeptide, removed in mature form.

It belongs to the cecropin family. In terms of tissue distribution, expressed in the body wall, intestine, uterus and ovary.

It localises to the secreted. Functionally, has antibacterial activity against several Gram-positive and Gram-negative bacteria. Is weakly active against yeasts. Acts by a nonpore mechanism. The sequence is that of Cecropin-P3 (ASCEC-3) from Ascaris suum (Pig roundworm).